The following is a 553-amino-acid chain: CTP synthase (553 aa).

The segment at 1–270 (MTKYVFVTGG…DELICEELKL (270 aa)) is amidoligase domain. CTP is bound at residue S13. S13 serves as a coordination point for UTP. Residues 14 to 19 (SLGKGI) and D71 contribute to the ATP site. Mg(2+) is bound by residues D71 and E144. CTP-binding positions include 151-153 (DIE), 191-196 (KTKPTQ), and K227. Residues 191–196 (KTKPTQ) and K227 each bind UTP. A Glutamine amidotransferase type-1 domain is found at 295-547 (TIGMVGKYVE…VEAARAHHEA (253 aa)). G356 is an L-glutamine binding site. C383 functions as the Nucleophile; for glutamine hydrolysis in the catalytic mechanism. L-glutamine is bound by residues 384-387 (LGMQ), E407, and R473. Catalysis depends on residues H520 and E522.

The protein belongs to the CTP synthase family. In terms of assembly, homotetramer.

The enzyme catalyses UTP + L-glutamine + ATP + H2O = CTP + L-glutamate + ADP + phosphate + 2 H(+). The catalysed reaction is L-glutamine + H2O = L-glutamate + NH4(+). It catalyses the reaction UTP + NH4(+) + ATP = CTP + ADP + phosphate + 2 H(+). Its pathway is pyrimidine metabolism; CTP biosynthesis via de novo pathway; CTP from UDP: step 2/2. Its activity is regulated as follows. Allosterically activated by GTP, when glutamine is the substrate; GTP has no effect on the reaction when ammonia is the substrate. The allosteric effector GTP functions by stabilizing the protein conformation that binds the tetrahedral intermediate(s) formed during glutamine hydrolysis. Inhibited by the product CTP, via allosteric rather than competitive inhibition. Catalyzes the ATP-dependent amination of UTP to CTP with either L-glutamine or ammonia as the source of nitrogen. Regulates intracellular CTP levels through interactions with the four ribonucleotide triphosphates. This chain is CTP synthase, found in Paraburkholderia phymatum (strain DSM 17167 / CIP 108236 / LMG 21445 / STM815) (Burkholderia phymatum).